The primary structure comprises 246 residues: 4'-phosphopantetheinyl transferase Svp (246 aa).

Low complexity predominate over residues 223–232 (AGTAEESAEG). The segment at 223–246 (AGTAEESAEGAGKEATADDRTAVP) is disordered. Residues 233–246 (AGKEATADDRTAVP) are compositionally biased toward basic and acidic residues.

It belongs to the P-Pant transferase superfamily. Gsp/Sfp/HetI/AcpT family.

The catalysed reaction is apo-[ACP] + CoA = holo-[ACP] + adenosine 3',5'-bisphosphate + H(+). Its function is as follows. Transfers the 4'-phosphopantetheine moiety from coenzyme A to a Ser of an acyl-carrier-protein. The enzyme is able to transfer the cofactor to a broad range of enzymes with acyl- or peptidyl-carrier protein domains. The protein is 4'-phosphopantetheinyl transferase Svp (svp) of Streptomyces mobaraensis (Streptoverticillium mobaraense).